A 493-amino-acid polypeptide reads, in one-letter code: Ketol-acid reductoisomerase (NADP(+)) (493 aa).

One can recognise a KARI N-terminal Rossmann domain in the interval 17-208; it reads LGKCRFMKRE…GGDRAGVLES (192 aa). NADP(+) is bound by residues 45 to 48, Arg-68, Arg-76, Ser-78, and 108 to 110; these read CGAQ and DKQ. His-132 is an active-site residue. An NADP(+)-binding site is contributed by Gly-158. KARI C-terminal knotted domains lie at 209–353 and 354–486; these read SFIA…SEQE and YYDK…MTDM. Asp-217, Glu-221, Glu-389, and Glu-393 together coordinate Mg(2+). Residue Ser-414 coordinates substrate.

The protein belongs to the ketol-acid reductoisomerase family. The cofactor is Mg(2+).

It carries out the reaction (2R)-2,3-dihydroxy-3-methylbutanoate + NADP(+) = (2S)-2-acetolactate + NADPH + H(+). It catalyses the reaction (2R,3R)-2,3-dihydroxy-3-methylpentanoate + NADP(+) = (S)-2-ethyl-2-hydroxy-3-oxobutanoate + NADPH + H(+). It functions in the pathway amino-acid biosynthesis; L-isoleucine biosynthesis; L-isoleucine from 2-oxobutanoate: step 2/4. Its pathway is amino-acid biosynthesis; L-valine biosynthesis; L-valine from pyruvate: step 2/4. Its function is as follows. Involved in the biosynthesis of branched-chain amino acids (BCAA). Catalyzes an alkyl-migration followed by a ketol-acid reduction of (S)-2-acetolactate (S2AL) to yield (R)-2,3-dihydroxy-isovalerate. In the isomerase reaction, S2AL is rearranged via a Mg-dependent methyl migration to produce 3-hydroxy-3-methyl-2-ketobutyrate (HMKB). In the reductase reaction, this 2-ketoacid undergoes a metal-dependent reduction by NADPH to yield (R)-2,3-dihydroxy-isovalerate. The protein is Ketol-acid reductoisomerase (NADP(+)) of Colwellia psychrerythraea (strain 34H / ATCC BAA-681) (Vibrio psychroerythus).